We begin with the raw amino-acid sequence, 392 residues long: Probable Ni/Fe-hydrogenase 2 b-type cytochrome subunit (392 aa).

Residues 1–11 are Periplasmic-facing; the sequence is MSHDPQPLGGK. Residues 12 to 32 form a helical membrane-spanning segment; sequence IISKPVMIFGPLIVICMLLIV. Residues 33–34 are Cytoplasmic-facing; the sequence is KR. The chain crosses the membrane as a helical span at residues 35-55; it reads LVFGLGSVSDLNGGFPWGVWI. The Periplasmic segment spans residues 56 to 58; sequence AFD. A helical transmembrane segment spans residues 59–79; sequence LLIGTGFACGGWALAWAVYVF. Residues 80–90 lie on the Cytoplasmic side of the membrane; sequence NRGQYHPLVRP. Residues 91–111 traverse the membrane as a helical segment; that stretch reads ALLASLFGYSLGGLSITIDVG. Over 112 to 133 the chain is Periplasmic; the sequence is RYWNLPYFYIPGHFNVNSVLFE. The chain crosses the membrane as a helical span at residues 134 to 154; that stretch reads TAVCMTIYIGVMALEFAPALF. The Cytoplasmic portion of the chain corresponds to 155–168; the sequence is ERLGWKVSLQRLNK. A helical transmembrane segment spans residues 169–189; it reads VMFFIIALGALLPTMHQSSMG. Over 190–207 the chain is Periplasmic; the sequence is SLMISAGYKVHPLWQSYE. The helical transmembrane segment at 208–228 threads the bilayer; that stretch reads MLPLFSLLTAFIMGFSIVIFE. Topologically, residues 229–249 are cytoplasmic; sequence GSLVQAGLRGNGPDEKSLFVK. A helical transmembrane segment spans residues 250–270; that stretch reads LTNTISVLLAIFIVLRFGELI. Residues 271 to 281 lie on the Periplasmic side of the membrane; the sequence is YRDKLSLAFAG. A helical transmembrane segment spans residues 282 to 302; the sequence is DFYSVMFWIEVLLMLFPLVVL. Residues 303–333 are Cytoplasmic-facing; it reads RVAKLRNDSRMLFLSALSALLGCATWRLTYS. A helical transmembrane segment spans residues 334 to 354; it reads LVAFNPGGGYAYFPTWEELLI. A topological domain (periplasmic) is located at residue serine 355. Residues 356–376 form a helical membrane-spanning segment; it reads IGFVAIEICAYIVLIRLLPIL. At 377–392 the chain is on the cytoplasmic side; it reads PPLKQNDHNRHEASKA.

The protein belongs to the NrfD family.

The protein resides in the cell inner membrane. Functionally, probable b-type cytochrome. The protein is Probable Ni/Fe-hydrogenase 2 b-type cytochrome subunit (hybB) of Escherichia coli (strain K12).